A 230-amino-acid chain; its full sequence is Cysteine S-methyltransferase OspZ (230 aa).

Residues 49–52 form an interaction with host proteins TAB2, TAB3 and ZRANB3 region; the sequence is GITR. Residues Ala92, Ser98, Arg107, Gln111, Tyr204, and Glu208 each contribute to the S-adenosyl-L-methionine site.

Belongs to the NleE/OspZ family. In terms of assembly, monomer.

It is found in the secreted. Its subcellular location is the host cytoplasm. It localises to the host nucleus. The enzyme catalyses L-cysteinyl-[protein] + S-adenosyl-L-methionine = S-methyl-L-cysteinyl-[protein] + S-adenosyl-L-homocysteine + H(+). Cysteine methyltransferase effector that inhibits host cell NF-kappa-B activation by preventing nuclear translocation of host protein RELA/p65. Acts by mediating cysteine methylation of host proteins TAB2 and TAB3: methylation of a conserved cysteine residue of the RanBP2-type zinc finger (NZF) of TAB2 and TAB3 disrupts zinc-binding, thereby inactivating the ubiquitin chain-binding activity of TAB2 and TAB3, leading to NF-kappa-B inactivation. Also mediates cysteine methylation of host protein ZRANB3, inactivating its ability to bind ubiquitin chains. The protein is Cysteine S-methyltransferase OspZ of Shigella flexneri.